A 162-amino-acid polypeptide reads, in one-letter code: Caveolin-2 (162 aa).

Residues Met-1 to Lys-86 lie on the Cytoplasmic side of the membrane. Tyr-19 is subject to Phosphotyrosine; by SRC. Phosphoserine occurs at positions 20 and 23. Tyr-27 is modified (phosphotyrosine; by SRC). Ser-36 is subject to Phosphoserine. An intramembrane region (helical) is located at residues Phe-87–Leu-107. At Ser-108 to Asp-162 the chain is on the cytoplasmic side.

The protein belongs to the caveolin family. Monomer or homodimer. Interacts with CAV1; the interaction forms a stable heterooligomeric complex that is required for targeting to lipid rafts and for caveolae formation. Tyrosine phosphorylated forms do not form heterooligomers with the Tyr-19-phosphorylated form existing as a monomer or dimer, and the Tyr-27-form as a monomer only. Interacts (tyrosine phosphorylated form) with the SH2 domain-containing proteins, RASA1, NCK1 and SRC. Interacts (tyrosine phosphorylated form) with INSR, the interaction (Tyr-27-phosphorylated form) is increased on insulin stimulation. Interacts (Tyr-19 phosphorylated form) with MAPK1 (phosphorylated form); the interaction, promoted by insulin, leads to nuclear location and MAPK1 activation. Interacts with STAT3; the interaction is increased on insulin-induced tyrosine phosphorylation leading to STAT activation. Phosphorylated on serine and tyrosine residues. CAV1 promotes phosphorylation on Ser-23 which then targets the complex to the plasma membrane, lipid rafts and caveolae. Phosphorylation on Ser-36 appears to modulate mitosis in endothelial cells. Phosphorylation on both Tyr-19 and Tyr-27 is required for insulin-induced 'Ser-727' phosphorylation of STAT3 and its activation. Phosphorylation on Tyr-19 is required for insulin-induced phosphorylation of MAPK1 and DNA binding of STAT3. Tyrosine phosphorylation is induced by both EGF and insulin (By. similarity).

The protein localises to the nucleus. It is found in the cytoplasm. Its subcellular location is the golgi apparatus membrane. It localises to the cell membrane. The protein resides in the membrane. The protein localises to the caveola. In terms of biological role, may act as a scaffolding protein within caveolar membranes. Interacts directly with G-protein alpha subunits and can functionally regulate their activity. Acts as an accessory protein in conjunction with CAV1 in targeting to lipid rafts and driving caveolae formation. The Ser-36 phosphorylated form has a role in modulating mitosis in endothelial cells. Positive regulator of cellular mitogenesis of the MAPK signaling pathway. Required for the insulin-stimulated nuclear translocation and activation of MAPK1 and STAT3, and the subsequent regulation of cell cycle progression. This Plecturocebus moloch (Dusky titi monkey) protein is Caveolin-2 (CAV2).